The sequence spans 509 residues: uncharacterized protein (509 aa).

The protein localises to the virion. This is an uncharacterized protein from Acanthamoeba polyphaga mimivirus (APMV).